A 500-amino-acid chain; its full sequence is Anthranilate synthase component 1 (500 aa).

Residues serine 49 and 276 to 278 (PFM) contribute to the L-tryptophan site. 311 to 312 (GT) contributes to the chorismate binding site. Glutamate 338 provides a ligand contact to Mg(2+). Chorismate is bound by residues tyrosine 426, arginine 446, 460–462 (GGG), and glycine 462. Glutamate 475 provides a ligand contact to Mg(2+).

It belongs to the anthranilate synthase component I family. Heterotetramer consisting of two non-identical subunits: a beta subunit (TrpG) and a large alpha subunit (TrpE). The cofactor is Mg(2+).

It carries out the reaction chorismate + L-glutamine = anthranilate + pyruvate + L-glutamate + H(+). Its pathway is amino-acid biosynthesis; L-tryptophan biosynthesis; L-tryptophan from chorismate: step 1/5. With respect to regulation, feedback inhibited by tryptophan. Functionally, part of a heterotetrameric complex that catalyzes the two-step biosynthesis of anthranilate, an intermediate in the biosynthesis of L-tryptophan. In the first step, the glutamine-binding beta subunit (TrpG) of anthranilate synthase (AS) provides the glutamine amidotransferase activity which generates ammonia as a substrate that, along with chorismate, is used in the second step, catalyzed by the large alpha subunit of AS (TrpE) to produce anthranilate. In the absence of TrpG, TrpE can synthesize anthranilate directly from chorismate and high concentrations of ammonia. The protein is Anthranilate synthase component 1 (trpE) of Cereibacter sphaeroides (strain ATCC 17023 / DSM 158 / JCM 6121 / CCUG 31486 / LMG 2827 / NBRC 12203 / NCIMB 8253 / ATH 2.4.1.) (Rhodobacter sphaeroides).